A 415-amino-acid chain; its full sequence is Phosphoribosylamine--glycine ligase (415 aa).

An ATP-grasp domain is found at 108–311; the sequence is KKIMEKYNIP…LMQHIIDLDE (204 aa). An ATP-binding site is contributed by 134 to 191; sequence IENCELPVVVKKDGLAAGKGVIIADTIEAARSAIEIMYGDEEEGTVVFETFLEGEEFS. Mg(2+) is bound by residues E281 and N283.

Belongs to the GARS family. The cofactor is Mg(2+). Mn(2+) is required as a cofactor.

It carries out the reaction 5-phospho-beta-D-ribosylamine + glycine + ATP = N(1)-(5-phospho-beta-D-ribosyl)glycinamide + ADP + phosphate + H(+). It participates in purine metabolism; IMP biosynthesis via de novo pathway; N(1)-(5-phospho-D-ribosyl)glycinamide from 5-phospho-alpha-D-ribose 1-diphosphate: step 2/2. In Staphylococcus aureus (strain MW2), this protein is Phosphoribosylamine--glycine ligase.